The primary structure comprises 454 residues: V-type ATP synthase subunit I 2 (454 aa).

A disordered region spans residues 101-121 (EREGDAPSVPRGKSSVAHDSA). 4 helical membrane passes run 254 to 274 (LLFG…VLGL), 293 to 313 (VFLS…EFFA), 351 to 371 (MAFF…GLII), and 424 to 444 (ACLS…SVCV).

The protein belongs to the V-ATPase 116 kDa subunit family.

The protein resides in the cell membrane. Produces ATP from ADP in the presence of a proton gradient across the membrane. The sequence is that of V-type ATP synthase subunit I 2 (atpI2) from Treponema pallidum (strain Nichols).